The primary structure comprises 445 residues: Phosphoglucosamine mutase (445 aa).

The active-site Phosphoserine intermediate is the Ser102. Mg(2+) is bound by residues Ser102, Asp241, Asp243, and Asp245. Position 102 is a phosphoserine (Ser102).

The protein belongs to the phosphohexose mutase family. Requires Mg(2+) as cofactor. Activated by phosphorylation.

The catalysed reaction is alpha-D-glucosamine 1-phosphate = D-glucosamine 6-phosphate. Functionally, catalyzes the conversion of glucosamine-6-phosphate to glucosamine-1-phosphate. In Shigella boydii serotype 4 (strain Sb227), this protein is Phosphoglucosamine mutase.